Here is a 338-residue protein sequence, read N- to C-terminus: Probable beta-1,4-xylosyltransferase IRX9 (338 aa).

The segment at Met-1–Ser-21 is disordered. Residues Met-1–Arg-27 lie on the Cytoplasmic side of the membrane. A helical; Signal-anchor for type II membrane protein transmembrane segment spans residues Ala-28–Ala-46. The Lumenal portion of the chain corresponds to Pro-47–Leu-338. N-linked (GlcNAc...) asparagine glycans are attached at residues Asn-232 and Asn-314.

Belongs to the glycosyltransferase 43 family.

The protein resides in the golgi apparatus membrane. Functionally, probable beta-1,4-xylosyltransferase involved in xylan biosynthesis in cell walls. This Oryza sativa subsp. japonica (Rice) protein is Probable beta-1,4-xylosyltransferase IRX9.